Reading from the N-terminus, the 772-residue chain is Ion-translocating oxidoreductase complex subunit C (772 aa).

4Fe-4S ferredoxin-type domains follow at residues Gly369–Tyr397 and Lys407–Phe436. Residues Cys377, Cys380, Cys383, Cys387, Cys416, Cys419, Cys422, and Cys426 each contribute to the [4Fe-4S] cluster site. Residues Lys599–Lys748 are disordered.

The protein belongs to the 4Fe4S bacterial-type ferredoxin family. RnfC subfamily. The complex is composed of six subunits: RsxA, RsxB, RsxC, RsxD, RsxE and RsxG. It depends on [4Fe-4S] cluster as a cofactor.

It localises to the cell inner membrane. In terms of biological role, part of a membrane-bound complex that couples electron transfer with translocation of ions across the membrane. Required to maintain the reduced state of SoxR. This chain is Ion-translocating oxidoreductase complex subunit C, found in Shigella dysenteriae serotype 1 (strain Sd197).